A 367-amino-acid polypeptide reads, in one-letter code: Germination protease (367 aa).

Residues 1–15 (MKEPLDLSKYSVRTD) constitute a propeptide that is removed on maturation.

This sequence belongs to the peptidase A25 family. Homotetramer. In terms of processing, autoproteolytically processed. The inactive tetrameric zymogen termed p46 autoprocesses to a smaller form termed p41, which is active only during spore germination.

The enzyme catalyses Endopeptidase action with P4 Glu or Asp, P1 preferably Glu &gt; Asp, P1' hydrophobic and P2' Ala.. In terms of biological role, initiates the rapid degradation of small, acid-soluble proteins during spore germination. In Bacillus cereus (strain G9842), this protein is Germination protease.